The sequence spans 173 residues: Co-chaperone protein HscB homolog (173 aa).

The J domain occupies 5 to 77; it reads SHFALFDLEP…SQRARYLLSL (73 aa).

The protein belongs to the HscB family. As to quaternary structure, interacts with HscA and stimulates its ATPase activity.

In terms of biological role, co-chaperone involved in the maturation of iron-sulfur cluster-containing proteins. Seems to help targeting proteins to be folded toward HscA. This Azotobacter vinelandii (strain DJ / ATCC BAA-1303) protein is Co-chaperone protein HscB homolog.